A 277-amino-acid chain; its full sequence is Large ribosomal subunit protein uL2 (277 aa).

The interval 219–277 (TVRGSVMNPNDHPHGGGEGKAPVGRKAPSTPWGKPALGLKTRNKKAKSDKLIVRRRNEK) is disordered. Residues 264–277 (AKSDKLIVRRRNEK) show a composition bias toward basic and acidic residues.

Belongs to the universal ribosomal protein uL2 family. As to quaternary structure, part of the 50S ribosomal subunit. Forms a bridge to the 30S subunit in the 70S ribosome.

One of the primary rRNA binding proteins. Required for association of the 30S and 50S subunits to form the 70S ribosome, for tRNA binding and peptide bond formation. It has been suggested to have peptidyltransferase activity; this is somewhat controversial. Makes several contacts with the 16S rRNA in the 70S ribosome. This Streptococcus pyogenes serotype M1 protein is Large ribosomal subunit protein uL2.